Here is a 420-residue protein sequence, read N- to C-terminus: Serine palmitoyltransferase (420 aa).

Residues 134–135 (GY), H234, T262, and S264 contribute to the pyridoxal 5'-phosphate site. K265 carries the N6-(pyridoxal phosphate)lysine modification.

It belongs to the class-II pyridoxal-phosphate-dependent aminotransferase family. Homodimer. The cofactor is pyridoxal 5'-phosphate.

The protein resides in the cytoplasm. The enzyme catalyses L-serine + hexadecanoyl-CoA + H(+) = 3-oxosphinganine + CO2 + CoA. The protein operates within lipid metabolism; sphingolipid metabolism. Not inhibited by relatively high concentrations of palmitoyl-CoA. Inhibited by both D-cycloserine (DCS) and L-cycloserine (LCS), which inactivate SPT by transamination to form a free pyridoxamine 5'-phosphate (PMP) and beta-aminooxyacetaldehyde that remain bound at the active site. Inhibition is reversed by incubation with excess pyridoxal phosphate. Inhibited by the fungal natural product myriocin, which acts as a competitive inhibitor for both L-serine and palmitoyl-CoA substrates. In terms of biological role, catalyzes the condensation of L-serine with palmitoyl-CoA (hexadecanoyl-CoA) to produce 3-oxosphinganine. Exhibits a broad substrate specificity concerning the chain length and the degree of unsaturation of acyl-CoA. The chain is Serine palmitoyltransferase from Sphingomonas paucimobilis (Pseudomonas paucimobilis).